Reading from the N-terminus, the 60-residue chain is MMAKTIKVTQVRSSIARLPKHKATLRGLGLRRINHTIELIDTPAIRGMINQVSYMVKVEE.

This sequence belongs to the universal ribosomal protein uL30 family. As to quaternary structure, part of the 50S ribosomal subunit.

This Histophilus somni (strain 2336) (Haemophilus somnus) protein is Large ribosomal subunit protein uL30.